Reading from the N-terminus, the 93-residue chain is Large ribosomal subunit protein uL23 (93 aa).

Belongs to the universal ribosomal protein uL23 family. Part of the 50S ribosomal subunit. Contacts protein L29, and trigger factor when it is bound to the ribosome.

Functionally, one of the early assembly proteins it binds 23S rRNA. One of the proteins that surrounds the polypeptide exit tunnel on the outside of the ribosome. Forms the main docking site for trigger factor binding to the ribosome. The polypeptide is Large ribosomal subunit protein uL23 (Campylobacter curvus (strain 525.92)).